The chain runs to 226 residues: Exopolysaccharide production protein ExoY (226 aa).

A helical transmembrane segment spans residues 34–54 (VLAASVALLLFSPLFLLIMAL).

This sequence belongs to the bacterial sugar transferase family.

The protein resides in the cell membrane. Its pathway is glycan metabolism; exopolysaccharide biosynthesis. Needed for the addition of the first sugar (galactose) to the isoprenoid carrier. May function as a sugar transferase. This Rhizobium meliloti (strain 1021) (Ensifer meliloti) protein is Exopolysaccharide production protein ExoY (exoY).